The following is a 669-amino-acid chain: Small ribosomal subunit protein mS39 (669 aa).

The transit peptide at 1–13 (MAAPCVRLGSVRC) directs the protein to the mitochondrion. 11 PPR repeats span residues 129-163 (IEGVSEEALKERIQLRRIKESIDLFDQLLQGGTAP), 164-199 (SLETTNRLLDLICFYGDREPTRDIQTSEQNQQDDQD), 209-239 (RPGQYRKASEILGSWRENNNAERIFNLMPER), 240-274 (NAHSFCTLIQGMVKYGSSNKAFNTYTDLMNNRLTA), 275-314 (DVQTFNALILAAPDMKEKYNEKWDLIVELLKHMVQQNVRP), 315-351 (NLLTFNSVLKSLRKCGTMARGLALQTINEMKALNIEP), 352-392 (SLGT…FTLR), 396-430 (DVYFFTNAMRVCLDLKDIELAYRLHALQQTADNRG), 438-472 (QSTYYGRFFNLLCMMENIDVILKWYRELIPSLYYP), 473-507 (NSRGMLDLLQALDMDNCLDLIPQIWKDIKQIGHSN), and 556-590 (SSASLGNISVLLARAGRTEEAWKMLQRFKTNHRVP). The segment at 186–218 (DIQTSEQNQQDDQDQQETEDSKKRPGQYRKASE) is disordered. The span at 194 to 203 (QQDDQDQQET) shows a compositional bias: acidic residues. A disordered region spans residues 648-669 (EDLQKSHSSSSSSSESSDSDRE). Over residues 653 to 663 (SHSSSSSSSES) the composition is skewed to low complexity.

This sequence belongs to the mitochondrion-specific ribosomal protein mS39 family.

Its subcellular location is the mitochondrion. Mitochondrial protein that may have a role in mitochondrial translation. The sequence is that of Small ribosomal subunit protein mS39 (ptcd3) from Xenopus laevis (African clawed frog).